The following is a 250-amino-acid chain: Adenosylcobinamide-GDP ribazoletransferase (250 aa).

6 helical membrane passes run 33–53 (IASYFPIVGIVIGGILSLLYI), 63–83 (IVMTFIVAFSYVLTGAMHIDG), 109–129 (LGTNGVLAAIFIVVLKILFLT), 137–157 (LTALLITPIIGRLSIVFSMMI), 180–200 (FAIAFVISIATSYFILPLAVF), and 203–223 (ILTISLFVTYIVSKYISLRIG).

It belongs to the CobS family. Mg(2+) serves as cofactor.

It localises to the cell membrane. The catalysed reaction is alpha-ribazole + adenosylcob(III)inamide-GDP = adenosylcob(III)alamin + GMP + H(+). It catalyses the reaction alpha-ribazole 5'-phosphate + adenosylcob(III)inamide-GDP = adenosylcob(III)alamin 5'-phosphate + GMP + H(+). It participates in cofactor biosynthesis; adenosylcobalamin biosynthesis; adenosylcobalamin from cob(II)yrinate a,c-diamide: step 7/7. In terms of biological role, joins adenosylcobinamide-GDP and alpha-ribazole to generate adenosylcobalamin (Ado-cobalamin). Also synthesizes adenosylcobalamin 5'-phosphate from adenosylcobinamide-GDP and alpha-ribazole 5'-phosphate. The protein is Adenosylcobinamide-GDP ribazoletransferase of Thermoanaerobacter pseudethanolicus (strain ATCC 33223 / 39E) (Clostridium thermohydrosulfuricum).